The chain runs to 371 residues: Riboflavin biosynthesis protein RibD (371 aa).

The segment at 1-150 (MEVSSEQQLF…QPYLHQRETG (150 aa)) is deaminase. The 123-residue stretch at 6–128 (EQQLFFMREA…RLKEAGISVY (123 aa)) folds into the CMP/dCMP-type deaminase domain. Histidine 55 is a binding site for Zn(2+). Glutamate 57 functions as the Proton donor in the catalytic mechanism. 2 residues coordinate Zn(2+): cysteine 80 and cysteine 89. The interval 151–371 (LPWVVMKTAA…CFECVGREDG (221 aa)) is reductase. NADP(+) is bound at residue alanine 159. Serine 173 lines the substrate pocket. Tryptophan 175 is a binding site for NADP(+). Substrate is bound at residue arginine 189. Residues threonine 201 and aspartate 205 each coordinate NADP(+). Leucine 209 and arginine 212 together coordinate substrate. Serine 230 provides a ligand contact to NADP(+). Glutamate 299 is a substrate binding site. Residue 301–307 (GARLHSA) participates in NADP(+) binding.

The protein in the N-terminal section; belongs to the cytidine and deoxycytidylate deaminase family. This sequence in the C-terminal section; belongs to the HTP reductase family. It depends on Zn(2+) as a cofactor.

It catalyses the reaction 2,5-diamino-6-hydroxy-4-(5-phosphoribosylamino)-pyrimidine + H2O + H(+) = 5-amino-6-(5-phospho-D-ribosylamino)uracil + NH4(+). It carries out the reaction 5-amino-6-(5-phospho-D-ribitylamino)uracil + NADP(+) = 5-amino-6-(5-phospho-D-ribosylamino)uracil + NADPH + H(+). Its pathway is cofactor biosynthesis; riboflavin biosynthesis; 5-amino-6-(D-ribitylamino)uracil from GTP: step 2/4. The protein operates within cofactor biosynthesis; riboflavin biosynthesis; 5-amino-6-(D-ribitylamino)uracil from GTP: step 3/4. Its function is as follows. Converts 2,5-diamino-6-(ribosylamino)-4(3h)-pyrimidinone 5'-phosphate into 5-amino-6-(ribosylamino)-2,4(1h,3h)-pyrimidinedione 5'-phosphate. The chain is Riboflavin biosynthesis protein RibD (ribD) from Chlamydia muridarum (strain MoPn / Nigg).